Reading from the N-terminus, the 263-residue chain is uncharacterized protein (263 aa).

31 to 38 (GPTGSGKT) provides a ligand contact to ATP.

The protein belongs to the CbbQ/NirQ/NorQ/GpvN family.

This is an uncharacterized protein from Staphylococcus epidermidis (strain ATCC 35984 / DSM 28319 / BCRC 17069 / CCUG 31568 / BM 3577 / RP62A).